The chain runs to 544 residues: NEDD4-binding protein 3 (544 aa).

Disordered stretches follow at residues 61 to 84 (LPKK…ADYA), 116 to 252 (SVFK…EFSC), 335 to 365 (KELR…PEEE), and 430 to 465 (QEQA…RDSA). Residue serine 176 is modified to Phosphoserine. A compositionally biased stretch (low complexity) spans 186–222 (PSLSDSSSGGSFGRSPGTGPSPFSSSLGHLNHLGGSL). The stretch at 294–530 (LAELKRLYVE…LEQELRALRE (237 aa)) forms a coiled coil.

It belongs to the N4BP3 family. Binds NEDD4. Interacts with 14-3-3 proteins. Interacts with MAVS.

It localises to the cytoplasmic vesicle. The protein resides in the cell projection. It is found in the axon. The protein localises to the dendrite. Its function is as follows. Plays a positive role in the antiviral innate immune signaling pathway. Mechanistically, interacts with MAVS and functions as a positive regulator to promote 'Lys-63'-linked polyubiquitination of MAVS and thus strengthens the interaction between MAVS and TRAF2. Also plays a role in axon and dendrite arborization during cranial nerve development. May also be important for neural crest migration and early development of other anterior structures including eye, brain and cranial cartilage. The chain is NEDD4-binding protein 3 (N4BP3) from Homo sapiens (Human).